The following is a 434-amino-acid chain: Probable proline transporter 2 (434 aa).

11 consecutive transmembrane segments (helical) span residues 26-46 (PWYQ…VLGY), 49-69 (SVMV…AAAI), 106-126 (LTWA…IILA), 149-169 (IALS…LSAL), 171-191 (IWLG…FVLS), 213-233 (IFTT…GMLP), 251-271 (LWFQ…MGYW), 297-317 (LSAF…MYEF), 339-359 (VGVR…LPFL), 362-382 (FMSL…ANHM), and 403-423 (VAGF…LIMV).

Belongs to the amino acid/polyamine transporter 2 family. Amino acid/auxin permease (AAAP) (TC 2.A.18.3) subfamily.

It is found in the cell membrane. In terms of biological role, proline transporter that mediates proline transport across the plasma membrane. The protein is Probable proline transporter 2 of Oryza sativa subsp. japonica (Rice).